The chain runs to 237 residues: Bax inhibitor 1 (237 aa).

The Cytoplasmic segment spans residues Met1–Lys29. Residue Lys7 forms a Glycyl lysine isopeptide (Lys-Gly) (interchain with G-Cter in ubiquitin) linkage. Residues Val30–Val50 traverse the membrane as a helical segment. Topologically, residues Thr51–Arg52 are lumenal. Residues Phe53–Ala73 form a helical membrane-spanning segment. The Cytoplasmic portion of the chain corresponds to Thr74–Gly86. Residues Leu87–Ile107 traverse the membrane as a helical segment. Residues Ala108–Ser112 are Lumenal-facing. The chain crosses the membrane as a helical span at residues Ile113 to Leu133. Topologically, residues Tyr134–Ser139 are cytoplasmic. A helical membrane pass occupies residues Tyr140–Gly160. At Asn161–Ser166 the chain is on the lumenal side. A helical transmembrane segment spans residues Ile167–Phe187. The Cytoplasmic portion of the chain corresponds to Asp188–His206. An intramembrane region (helical) is located at residues Cys207 to Met227. The Cytoplasmic portion of the chain corresponds to Asn228 to Lys237.

It belongs to the BI1 family. In terms of assembly, interacts with BCL2 and BCL2L1. Interacts with ERN1. In terms of processing, ubiquitinated by BFAR, leading to proteasomal degradation.

The protein resides in the endoplasmic reticulum membrane. Its function is as follows. Endoplasmic reticulum (ER)-resident protein that confers cellular protection as an anti-apoptotic protein by limiting multiple stress-inducing pathways surrounding the endoplasmic reticulum and mitochondria. Inhibits the activities of the key sensor for the endoplasmic reticulum unfolded protein response IRE1alpha/ERN1 both directly and by blocking BAX/BAK binding. Modulates ER calcium homeostasis by acting as a calcium-leak channel. Negatively regulates autophagy and autophagosome formation, especially during periods of nutrient deprivation, and reduces cell survival during starvation. The protein is Bax inhibitor 1 (TMBIM6) of Sus scrofa (Pig).